The chain runs to 626 residues: Chaperone protein HtpG (626 aa).

Residues 1-339 form an a; substrate-binding region; sequence MSTNQETRGF…SNDLPLNVSR (339 aa). Residues 340–555 are b; sequence EILQDNKVTA…NDQMTTQMAK (216 aa). The c stretch occupies residues 556-626; the sequence is LFAAAGQPVP…FIKRVNNLLG (71 aa).

The protein belongs to the heat shock protein 90 family. As to quaternary structure, homodimer.

The protein localises to the cytoplasm. Molecular chaperone. Has ATPase activity. The chain is Chaperone protein HtpG from Histophilus somni (strain 2336) (Haemophilus somnus).